A 102-amino-acid polypeptide reads, in one-letter code: Defensin-like protein 285 (102 aa).

The first 28 residues, 1–28 (MTNLYFKTAFLLSLLLLSFSYQSKLIEA), serve as a signal peptide directing secretion. Intrachain disulfides connect C39/C100, C64/C83, C70/C88, and C75/C90.

This sequence belongs to the DEFL family.

The protein resides in the secreted. The chain is Defensin-like protein 285 from Arabidopsis thaliana (Mouse-ear cress).